Consider the following 315-residue polypeptide: Voltage-dependent calcium channel gamma-3 subunit (315 aa).

4 helical membrane-spanning segments follow: residues 8–28 (IQML…TIAV), 104–124 (SSVF…CVAA), 135–155 (ILSA…GIIV), and 181–201 (FGAF…HIYI). Positions 232 to 253 (RRRSSSRSTEPRSRDLSPISKG) are disordered. At Ser-248 the chain carries Phosphoserine.

This sequence belongs to the PMP-22/EMP/MP20 family. CACNG subfamily. In terms of assembly, the L-type calcium channel is composed of five subunits: alpha-1, alpha-2/delta, beta and gamma. Acts as an auxiliary subunit for AMPA-selective glutamate receptors (AMPARs). Found in a complex with GRIA1, GRIA2, GRIA3, GRIA4, CNIH2, CNIH3, CACNG2, CACNG4, CACNG5, CACNG7 and CACNG8. Interacts with AP4M1 and GRIA1; associates GRIA1 with the adaptor protein complex 4 (AP-4) to target GRIA1 to the somatodendritic compartment of neurons.

The protein resides in the membrane. In terms of biological role, regulates the trafficking to the somatodendritic compartment and gating properties of AMPA-selective glutamate receptors (AMPARs). Promotes their targeting to the cell membrane and synapses and modulates their gating properties by slowing their rates of activation, deactivation and desensitization. Does not show subunit-specific AMPA receptor regulation and regulates all AMPAR subunits. Thought to stabilize the calcium channel in an inactivated (closed) state. This chain is Voltage-dependent calcium channel gamma-3 subunit (Cacng3), found in Mus musculus (Mouse).